Consider the following 842-residue polypeptide: Protein P (842 aa).

The segment at 1–177 (MPLSYQHFRR…FCGSPYTWEQ (177 aa)) is terminal protein domain (TP). A spacer region spans residues 178–345 (DLQHGAFLDG…YCLSHLVNLL (168 aa)). The segment at 184–238 (FLDGPSRVGKEPFHQQSSRIPSRSPVGPSIQSKYQQSRLGLQSQKGPLARGQQGR) is disordered. Residues 212 to 228 (SIQSKYQQSRLGLQSQK) show a composition bias toward polar residues. Residues 346-689 (QDWGPCTEHG…YMNLYPVARQ (344 aa)) form a polymerase/reverse transcriptase domain (RT) region. Positions 356–599 (EYHIRIPRTP…YSLNFMGYVI (244 aa)) constitute a Reverse transcriptase domain. Residues aspartate 428, aspartate 550, and aspartate 551 each contribute to the Mg(2+) site.

The protein belongs to the hepadnaviridae P protein family.

It carries out the reaction DNA(n) + a 2'-deoxyribonucleoside 5'-triphosphate = DNA(n+1) + diphosphate. The catalysed reaction is Endonucleolytic cleavage to 5'-phosphomonoester.. Activated by host HSP70 and HSP40 in vitro to be able to bind the epsilon loop of the pgRNA. Because deletion of the RNase H region renders the protein partly chaperone-independent, the chaperones may be needed indirectly to relieve occlusion of the RNA-binding site by this domain. Inhibited by several reverse-transcriptase inhibitors: Lamivudine, Adefovir and Entecavir. Multifunctional enzyme that converts the viral RNA genome into dsDNA in viral cytoplasmic capsids. This enzyme displays a DNA polymerase activity that can copy either DNA or RNA templates, and a ribonuclease H (RNase H) activity that cleaves the RNA strand of RNA-DNA heteroduplexes in a partially processive 3'- to 5'-endonucleasic mode. Neo-synthesized pregenomic RNA (pgRNA) are encapsidated together with the P protein, and reverse-transcribed inside the nucleocapsid. Initiation of reverse-transcription occurs first by binding the epsilon loop on the pgRNA genome, and is initiated by protein priming, thereby the 5'-end of (-)DNA is covalently linked to P protein. Partial (+)DNA is synthesized from the (-)DNA template and generates the relaxed circular DNA (RC-DNA) genome. After budding and infection, the RC-DNA migrates in the nucleus, and is converted into a plasmid-like covalently closed circular DNA (cccDNA). The activity of P protein does not seem to be necessary for cccDNA generation, and is presumably released from (+)DNA by host nuclear DNA repair machinery. The chain is Protein P from Hepatitis B virus genotype G (isolate United States/USG17/2002) (HBV-G).